The sequence spans 442 residues: MHIADQSGAAAAQRKPLYAQLYVQVLVAITVGILLGHYYPSIGESMKPLGDAFIKLVKMIIAPVIFLTVATGIAGMSDLQKVGRVAGKAMLYFLTFSTLALIIGLVVANVVQPGAGFNIDPATLDASTVNTYAAKAHDQSVTGFLMNIIPGTIVGAFADGDILQVLFFSVLFGIALALVGDKGAPVLNFLQALMAPMFKLVSVLMKAAPIGAFGAMAFTIGKYGIGSVINLAMLVGTFYATSLLFVFVVLGAVCRYNGFSILSLLRYIKEELLLVLGTSSSEAALPSLMEKMEKAGAKRSVVGLVIPTGYSFNLDGTNIYMTLAALFIAQATNIHLSMGDQILLLLVAMLSSKGAAGITGAGFITLAATLSVVPSVPVAGMALILGVDRFMSECRALTNFIGNAVATLVVARWEGELDEAKLARALAGTADDSLPADIVPAE.

9 consecutive transmembrane segments (helical) span residues 20-39 (QLYV…GHYY), 52-74 (AFIK…TGIA), 89-111 (AMLY…ANVV), 141-158 (VTGF…GAFA), 162-179 (ILQV…LALV), 200-221 (LVSV…FTIG), 231-253 (LAML…LGAV), 342-364 (ILLL…AGFI), and 368-387 (ATLS…ILGV).

Belongs to the dicarboxylate/amino acid:cation symporter (DAACS) (TC 2.A.23) family.

The protein localises to the cell inner membrane. Functionally, responsible for the transport of dicarboxylates such as succinate, fumarate, and malate from the periplasm across the membrane. This transport system plays an important role in the energy supply of rhizobium-legume symbionts. The chain is C4-dicarboxylate transport protein 2 (dctA2) from Mesorhizobium japonicum (strain LMG 29417 / CECT 9101 / MAFF 303099) (Mesorhizobium loti (strain MAFF 303099)).